The chain runs to 172 residues: Protein-export protein SecB (172 aa).

This sequence belongs to the SecB family. In terms of assembly, homotetramer, a dimer of dimers. One homotetramer interacts with 1 SecA dimer.

It is found in the cytoplasm. In terms of biological role, one of the proteins required for the normal export of preproteins out of the cell cytoplasm. It is a molecular chaperone that binds to a subset of precursor proteins, maintaining them in a translocation-competent state. It also specifically binds to its receptor SecA. The protein is Protein-export protein SecB of Cupriavidus pinatubonensis (strain JMP 134 / LMG 1197) (Cupriavidus necator (strain JMP 134)).